The chain runs to 849 residues: Rho guanine nucleotide exchange factor 15 (849 aa).

Disordered regions lie at residues 1–146 (MSAQ…ASAP), 159–202 (GAEG…NGTP), and 277–308 (LPPL…LPSE). Basic residues predominate over residues 18–31 (RIIRPRPPSRHRAP). The segment covering 48–59 (QISNDASASVCT) has biased composition (polar residues). Residues 65–110 (PPTASLKPPALLPPSVSRTSLDSQTSPDSPSSTPSPSPVSRRSISP) show a composition bias toward low complexity. Phosphoserine is present on residues serine 107 and serine 109. The segment covering 111–123 (EPAPCSPVPPPKP) has biased composition (pro residues). Residues 164-180 (AQSSDSLERCSQGSTEV) show a composition bias toward polar residues. Tyrosine 361 is modified (phosphotyrosine; by EPHB2). Positions 425-609 (RMQESLFEVV…SKIIERCSAE (185 aa)) constitute a DH domain. 2 stretches are compositionally biased toward polar residues: residues 771–786 (CSEP…QSLE) and 840–849 (SSGTPDTPQP). 2 disordered regions span residues 771–803 (CSEP…GWLK) and 819–849 (GEHE…TPQP).

Interacts with EPHA4. Interacts with EPHB2. Post-translationally, phosphorylated on tyrosine residues upon EFNA1 stimulation. EPHB2-dependent phosphorylation at Tyr-361 triggers UBE3A-mediated ubiquitination. In terms of processing, ubiquitinated; UBE3A-mediated ubiquitination and degradation by the proteasome promotes EFNB1-dependent synapse formation. In terms of tissue distribution, at P12, expressed is detected in the CA1 region and the dentate gyrus of the hippocampus.

The protein resides in the cell projection. It localises to the dendrite. Functionally, specific GEF for RhoA activation. Does not activate RAC1 or CDC42. Regulates vascular smooth muscle contractility. Negatively regulates excitatory synapse development by suppressing the synapse-promoting activity of EPHB2. The polypeptide is Rho guanine nucleotide exchange factor 15 (Arhgef15) (Mus musculus (Mouse)).